We begin with the raw amino-acid sequence, 164 residues long: Succinate dehydrogenase assembly factor 3, mitochondrial (164 aa).

The transit peptide at 1–51 (MRPTLLRLANASGPLPLSVSQASVQLIPPIPLYRRLLRAHRLLPVDMRYMG) directs the protein to the mitochondrion. Positions 136–145 (KSPEQIEREA) are enriched in basic and acidic residues. A disordered region spans residues 136-164 (KSPEQIEREANSAGVSPVNPNDPTTAGNS). Polar residues predominate over residues 153-164 (VNPNDPTTAGNS).

The protein belongs to the complex I LYR family. SDHAF3 subfamily. In terms of assembly, interacts with the iron-sulfur protein subunit within the SDH catalytic dimer.

It localises to the mitochondrion matrix. In terms of biological role, plays an essential role in the assembly of succinate dehydrogenase (SDH), an enzyme complex (also referred to as respiratory complex II) that is a component of both the tricarboxylic acid (TCA) cycle and the mitochondrial electron transport chain, and which couples the oxidation of succinate to fumarate with the reduction of ubiquinone (coenzyme Q) to ubiquinol. Promotes maturation of the iron-sulfur protein subunit of the SDH catalytic dimer, protecting it from the deleterious effects of oxidants. May act together with SDHAF1. In Cryptococcus neoformans var. neoformans serotype D (strain B-3501A) (Filobasidiella neoformans), this protein is Succinate dehydrogenase assembly factor 3, mitochondrial.